A 291-amino-acid chain; its full sequence is Formamidopyrimidine-DNA glycosylase (291 aa).

Catalysis depends on Pro-2, which acts as the Schiff-base intermediate with DNA. Glu-3 functions as the Proton donor in the catalytic mechanism. The active-site Proton donor; for beta-elimination activity is Lys-61. 3 residues coordinate DNA: His-103, Arg-123, and Arg-165. The FPG-type zinc-finger motif lies at 251-285 (EVYGRGGQACSRCASTIRRDAFMNRSSFSCPACQP). Catalysis depends on Arg-275, which acts as the Proton donor; for delta-elimination activity.

The protein belongs to the FPG family. Monomer. Zn(2+) serves as cofactor.

It carries out the reaction Hydrolysis of DNA containing ring-opened 7-methylguanine residues, releasing 2,6-diamino-4-hydroxy-5-(N-methyl)formamidopyrimidine.. It catalyses the reaction 2'-deoxyribonucleotide-(2'-deoxyribose 5'-phosphate)-2'-deoxyribonucleotide-DNA = a 3'-end 2'-deoxyribonucleotide-(2,3-dehydro-2,3-deoxyribose 5'-phosphate)-DNA + a 5'-end 5'-phospho-2'-deoxyribonucleoside-DNA + H(+). Its function is as follows. Involved in base excision repair of DNA damaged by oxidation or by mutagenic agents. Acts as a DNA glycosylase that recognizes and removes damaged bases. Has a preference for oxidized purines, such as 7,8-dihydro-8-oxoguanine (8-oxoG). Has AP (apurinic/apyrimidinic) lyase activity and introduces nicks in the DNA strand. Cleaves the DNA backbone by beta-delta elimination to generate a single-strand break at the site of the removed base with both 3'- and 5'-phosphates. The protein is Formamidopyrimidine-DNA glycosylase of Parafrankia sp. (strain EAN1pec).